The chain runs to 348 residues: 11-beta-hydroxysteroid dehydrogenase A (348 aa).

The chain crosses the membrane as a helical; Signal-anchor for type II membrane protein span at residues 10 to 30 (LIAPPFTFFFLLFFLPPFQIF). The Proline-knob motif lies at 13 to 26 (PPFTFFFLLFFLPP). Residues 54 to 80 (GASS…AARR), aspartate 105, and 132 to 135 (NAGI) contribute to the NADP(+) site. Serine 184 serves as a coordination point for substrate. Residue tyrosine 197 is the Proton acceptor of the active site. Residues 197–201 (YNASK) and lysine 201 each bind NADP(+).

It belongs to the short-chain dehydrogenases/reductases (SDR) family. As to expression, expressed in seeds (at protein level). Not expressed in stem, leaf or root (at protein level).

The protein resides in the lipid droplet. It localises to the membrane. The catalysed reaction is an 11beta-hydroxysteroid + NADP(+) = an 11-oxosteroid + NADPH + H(+). The enzyme catalyses an 11beta-hydroxysteroid + NAD(+) = an 11-oxosteroid + NADH + H(+). It catalyses the reaction corticosterone + NADP(+) = 11-dehydrocorticosterone + NADPH + H(+). It carries out the reaction corticosterone + NAD(+) = 11-dehydrocorticosterone + NADH + H(+). The catalysed reaction is 17beta-estradiol + NADP(+) = estrone + NADPH + H(+). The enzyme catalyses 17beta-estradiol + NAD(+) = estrone + NADH + H(+). Its function is as follows. Has dehydrogenase activity against corticosterone (11 beta-hydroxysteroid) and estradiol (17 beta-hydroxysteroid), with higher activity against estradiol. Possesses higher dehydrogenase activity with NADP(+) than NAD(+) regardless of the sterol substrate. May be involved in signal transduction regulated by various sterols. The chain is 11-beta-hydroxysteroid dehydrogenase A from Sesamum indicum (Oriental sesame).